Here is a 651-residue protein sequence, read N- to C-terminus: Probable potassium transport system protein Kup (651 aa).

The next 12 membrane-spanning stretches (helical) occupy residues 41-61 (LVLG…IYAF), 82-102 (VVSL…VLFV), 130-150 (LILG…VITP), 163-183 (IVAP…LVTL), 194-214 (VAIV…ASGL), 235-255 (FLTV…LAMT), 276-296 (WLWI…AFIL), 309-329 (MIPS…TVIA), 366-386 (IYIP…VLGF), 395-415 (AYGI…YIVM), 426-446 (ALPI…ANII), and 450-470 (EGGW…WTWV).

It belongs to the HAK/KUP transporter (TC 2.A.72) family.

It localises to the cell inner membrane. It carries out the reaction K(+)(in) + H(+)(in) = K(+)(out) + H(+)(out). Transport of potassium into the cell. Likely operates as a K(+):H(+) symporter. In Brucella melitensis biotype 1 (strain ATCC 23456 / CCUG 17765 / NCTC 10094 / 16M), this protein is Probable potassium transport system protein Kup.